Here is a 577-residue protein sequence, read N- to C-terminus: Cleavage stimulation factor subunit 2 (577 aa).

Phosphoserine is present on Ser-14. An RRM domain is found at 16–94 (RSVFVGNIPY…RALRVDNAAS (79 aa)). Positions 108-248 (APVIESPYGE…VNGAPPLMQA (141 aa)) are interactions with CSTF3 and SYMPK. Residue Lys-189 forms a Glycyl lysine isopeptide (Lys-Gly) (interchain with G-Cter in SUMO2) linkage. The segment at 206 to 243 (QPVHGAGPGSGSNVSMNQQNPQAPQAQSLGGMHVNGAP) is disordered. A compositionally biased stretch (low complexity) spans 222–232 (NQQNPQAPQAQ). Residue Arg-308 is modified to Omega-N-methylarginine. The disordered stretch occupies residues 340-409 (EVEPRGYLGP…DGRGGRDPRG (70 aa)). Over residues 360 to 373 (PGHESRGPPPHELR) the composition is skewed to basic and acidic residues. One copy of the 1; approximate repeat lies at 410–414 (IDARG). Positions 410–469 (IDARGMEARAMEARGLDARGLEARAMEARAMEARAMEARAMEARAMEVRGMEARGMDTRG) are 12 X 5 AA tandem repeats of M-E-A-R-[AG]. A run of 2 repeats spans residues 415-419 (MEARA) and 420-424 (MEARG). The stretch at 425–429 (LDARG) is one 4; approximate repeat. One copy of the 5; approximate repeat lies at 430–434 (LEARA). 4 consecutive repeat copies span residues 435–439 (MEARA), 440–444 (MEARA), 445–449 (MEARA), and 450–454 (MEARA). The stretch at 455–459 (MEVRG) is one 10; approximate repeat. Repeat unit 11 spans residues 460 to 464 (MEARG). Residues 465–469 (MDTRG) form a 12; approximate repeat. 2 positions are modified to omega-N-methylarginine: Arg-468 and Arg-475. The disordered stretch occupies residues 508 to 532 (GMQGASIQGGSQPGGFSPGQNQVTP). Residues 514–577 (IQGGSQPGGF…EQIQKSTGAP (64 aa)) form an interaction with RPO2TC1 region. Residues Ser-518 and Ser-524 each carry the phosphoserine modification.

As to quaternary structure, the CSTF complex is composed of CSTF1 (50 kDa subunit), CSTF2 (64 kDa subunit) and CSTF3 (77 kDa subunit). CSTF2 directly interacts with CSTF3, SYMPK and RPO2TC1. Interacts with HSF1 in heat-stressed cells. Interacts with CPSF2, CPSF3 and FIP1L1. Interacts with DDX1.

It localises to the nucleus. Its function is as follows. One of the multiple factors required for polyadenylation and 3'-end cleavage of mammalian pre-mRNAs. This subunit is directly involved in the binding to pre-mRNAs. This chain is Cleavage stimulation factor subunit 2 (CSTF2), found in Homo sapiens (Human).